The chain runs to 455 residues: Probable cytosolic iron-sulfur protein assembly protein 1 (455 aa).

WD repeat units follow at residues 31-70 (GHSSRAWHLAWNPRMPILASCSGDKDVRLHAYSFVSTTSA), 90-129 (GHQRTVRQVAWSPDGKILATASFDSTVGIWERIQDIDGSS), 163-202 (GHESECKSVAFSYTGGVLASCSRDKSVWIWEVQPDAEFEC), 208-247 (EHSQDVKVVAWHPNDEVLASASYDDAIKLYIDDPSDDWFC), 253-292 (GHESTVWSISFSPCGNYLASASDDLTVRIWRRLDADQCEA), 318-365 (YHDR…DEKS), and 380-453 (HASA…YAAT).

It belongs to the WD repeat CIA1 family.

Essential component of the cytosolic iron-sulfur (Fe/S) protein assembly machinery. Required for the maturation of extramitochondrial Fe/S proteins. In Mycosarcoma maydis (Corn smut fungus), this protein is Probable cytosolic iron-sulfur protein assembly protein 1.